The following is a 129-amino-acid chain: Small ribosomal subunit protein uS11 (129 aa).

Belongs to the universal ribosomal protein uS11 family. Part of the 30S ribosomal subunit. Interacts with proteins S7 and S18. Binds to IF-3.

Located on the platform of the 30S subunit, it bridges several disparate RNA helices of the 16S rRNA. Forms part of the Shine-Dalgarno cleft in the 70S ribosome. This Chelativorans sp. (strain BNC1) protein is Small ribosomal subunit protein uS11.